The primary structure comprises 536 residues: Pre-mRNA-splicing regulator female-lethal(2)D (536 aa).

The interval 1 to 91 (MSVAAMTMDD…LQQQQQQQQQ (91 aa)) is disordered. A compositionally biased stretch (low complexity) spans 28-39 (QNLNILNSSQNS). Over residues 57-69 (HHHHHPHPHHHHH) the composition is skewed to basic residues. The span at 72–91 (QQQQQQQQQHLQQQQQQQQQ) shows a compositional bias: low complexity. Residues 254–319 (KSFSEEVKKS…KQAIKDEVVA (66 aa)) adopt a coiled-coil conformation. Residues 424–450 (APRTLPPKKSKLRGITTRRNSQLEEDH) form a disordered region.

This sequence belongs to the fl(2)d family. In terms of assembly, component of the WMM complex, a N6-methyltransferase complex composed of a catalytic subcomplex, named MAC, and of an associated subcomplex, named MACOM. The MAC subcomplex is composed of Ime4/Mettl3 and Mettl14. The MACOM subcomplex is composed of fl(2)d, Flacc/Xio, Hakai, vir, and, in some cases of nito. Interacts with vir and msk. Part of a complex containing fl(2)d, Sxl and vir.

The protein resides in the nucleus. Associated component of the WMM complex, a complex that mediates N6-methyladenosine (m6A) methylation of mRNAs, a modification that plays a role in the efficiency of mRNA splicing and is required for sex determination. Required for sex determination and dosage compensation via Sxl alternative splicing: m6A methylation acts as a key regulator of Sxl pre-mRNA and promotes female-specific alternative splicing of Sxl, which determines female physiognomy. M6A methylation is also required for neuronal functions. Required for proper inclusion of regulated exons in Ubx transcripts, leading to isoforms Ia/b and IIa/b. The sequence is that of Pre-mRNA-splicing regulator female-lethal(2)D from Drosophila melanogaster (Fruit fly).